A 101-amino-acid chain; its full sequence is NAD(P)H-quinone oxidoreductase subunit 4L, chloroplastic (101 aa).

Transmembrane regions (helical) follow at residues 2–22, 32–52, and 61–81; these read ILEHVLVLSAYLFLIGLYGLI, MCLELILNAVNMNFVTFSDFF, and IFCIFVIAIAAAEAAIGLAIV.

Belongs to the complex I subunit 4L family. NDH is composed of at least 16 different subunits, 5 of which are encoded in the nucleus.

The protein localises to the plastid. Its subcellular location is the chloroplast thylakoid membrane. The catalysed reaction is a plastoquinone + NADH + (n+1) H(+)(in) = a plastoquinol + NAD(+) + n H(+)(out). It carries out the reaction a plastoquinone + NADPH + (n+1) H(+)(in) = a plastoquinol + NADP(+) + n H(+)(out). In terms of biological role, NDH shuttles electrons from NAD(P)H:plastoquinone, via FMN and iron-sulfur (Fe-S) centers, to quinones in the photosynthetic chain and possibly in a chloroplast respiratory chain. The immediate electron acceptor for the enzyme in this species is believed to be plastoquinone. Couples the redox reaction to proton translocation, and thus conserves the redox energy in a proton gradient. This is NAD(P)H-quinone oxidoreductase subunit 4L, chloroplastic from Arabis hirsuta (Hairy rock-cress).